The chain runs to 360 residues: DNA polymerase IV (360 aa).

The region spanning 6-187 (IIHVDMDAFY…LKIGDLHGVG (182 aa)) is the UmuC domain. Residues aspartate 10 and aspartate 105 each contribute to the Mg(2+) site. Glutamate 106 is a catalytic residue.

This sequence belongs to the DNA polymerase type-Y family. Monomer. Mg(2+) is required as a cofactor.

The protein localises to the cytoplasm. It catalyses the reaction DNA(n) + a 2'-deoxyribonucleoside 5'-triphosphate = DNA(n+1) + diphosphate. In terms of biological role, poorly processive, error-prone DNA polymerase involved in untargeted mutagenesis. Copies undamaged DNA at stalled replication forks, which arise in vivo from mismatched or misaligned primer ends. These misaligned primers can be extended by PolIV. Exhibits no 3'-5' exonuclease (proofreading) activity. May be involved in translesional synthesis, in conjunction with the beta clamp from PolIII. The chain is DNA polymerase IV from Exiguobacterium sibiricum (strain DSM 17290 / CCUG 55495 / CIP 109462 / JCM 13490 / 255-15).